The chain runs to 322 residues: tRNA pseudouridine synthase B (322 aa).

The segment covering 1-11 has biased composition (basic and acidic residues); the sequence is MRPPRTTELDR. The interval 1–22 is disordered; that stretch reads MRPPRTTELDRPMTTAASQRPR. Catalysis depends on Asp65, which acts as the Nucleophile.

This sequence belongs to the pseudouridine synthase TruB family. Type 1 subfamily.

It catalyses the reaction uridine(55) in tRNA = pseudouridine(55) in tRNA. Responsible for synthesis of pseudouridine from uracil-55 in the psi GC loop of transfer RNAs. This chain is tRNA pseudouridine synthase B, found in Burkholderia lata (strain ATCC 17760 / DSM 23089 / LMG 22485 / NCIMB 9086 / R18194 / 383).